A 246-amino-acid chain; its full sequence is PARP-type zinc finger-containing protein C2A9.07c (246 aa).

A PARP-type; degenerate zinc finger spans residues 8-99 (YRVELAKTGR…EKILRAFEQG (92 aa)). Basic and acidic residues predominate over residues 103–126 (EEDEERCRKMASDASEEKDRKIEE). Residues 103 to 246 (EEDEERCRKM…ESGNEYSDSD (144 aa)) are disordered. Thr130 bears the Phosphothreonine mark. Ser131 bears the Phosphoserine mark. Residues 157–168 (NKKHKAERKRSP) show a composition bias toward basic residues. Over residues 175–184 (LEDDEEIEDV) the composition is skewed to acidic residues. Over residues 185–196 (ASDKDEEEKPWS) the composition is skewed to basic and acidic residues. A compositionally biased stretch (acidic residues) spans 197-215 (GDEEDDDELVVKDSEDETE). Phosphoserine occurs at positions 243 and 245.

The protein localises to the nucleus. It is found in the mitochondrion. The polypeptide is PARP-type zinc finger-containing protein C2A9.07c (Schizosaccharomyces pombe (strain 972 / ATCC 24843) (Fission yeast)).